The following is a 265-amino-acid chain: 2-Cys peroxiredoxin BAS1, chloroplastic (265 aa).

The transit peptide at 1–65 (MACVASSTTL…SSTSRRSFAV (65 aa)) directs the protein to the chloroplast. A Thioredoxin domain is found at 73–232 (PLVGNKAPDF…TMRTLQALQY (160 aa)). The active-site Cysteine sulfenic acid (-SOH) intermediate is Cys-119.

It belongs to the peroxiredoxin family. AhpC/Prx1 subfamily. In terms of assembly, homodimer; disulfide-linked, upon oxidation.

It is found in the plastid. The protein resides in the chloroplast. It catalyses the reaction a hydroperoxide + [thioredoxin]-dithiol = an alcohol + [thioredoxin]-disulfide + H2O. Thiol-specific peroxidase that catalyzes the reduction of hydrogen peroxide and organic hydroperoxides to water and alcohols, respectively. Plays a role in cell protection against oxidative stress by detoxifying peroxides. May be an antioxidant enzyme particularly in the developing shoot and photosynthesizing leaf. This chain is 2-Cys peroxiredoxin BAS1, chloroplastic (BAS1), found in Spinacia oleracea (Spinach).